The sequence spans 367 residues: Testis-specific serine/threonine-protein kinase 1 (367 aa).

Residues 12 to 272 form the Protein kinase domain; the sequence is YLLGINLGEG…IDEILSHCWM (261 aa). Residues 18–26 and Lys41 each bind ATP; that span reads LGEGSYAKV. Asp136 serves as the catalytic Proton acceptor. The residue at position 174 (Thr174) is a Phosphothreonine. Residues 276 to 367 form a disordered region; the sequence is ARGSPSVAIN…PQQPPETRAQ (92 aa). The span at 303–314 shows a compositional bias: basic and acidic residues; the sequence is GSDKKSATKLEP.

It belongs to the protein kinase superfamily. CAMK Ser/Thr protein kinase family. In terms of assembly, interacts with TSSK2. Interacts with HSP90; this interaction stabilizes TSSK1. Mg(2+) is required as a cofactor. Post-translationally, autophosphorylated. Ubiquitinated; HSP90 activity negatively regulates ubiquitination and degradation. Testis-specific. Present in sperm (at protein level).

Its subcellular location is the cytoplasm. It is found in the cytoplasmic vesicle. The protein localises to the secretory vesicle. It localises to the acrosome. The protein resides in the cell projection. Its subcellular location is the cilium. It is found in the flagellum. The enzyme catalyses L-seryl-[protein] + ATP = O-phospho-L-seryl-[protein] + ADP + H(+). It catalyses the reaction L-threonyl-[protein] + ATP = O-phospho-L-threonyl-[protein] + ADP + H(+). Kinase activity is specifically inhibited by 2 classes of compounds: biphenyl compounds (1,1'-(biphenyl-4,4'-diyl)bis(2,2-dihydroxyethanone)) and 1,2,7-trialky-1H-imidazo[4,5-g]quinoxalin-6-one. Activated by phosphorylation on Thr-174 and potentially by autophosphorylation. Its function is as follows. Testis-specific serine/threonine-protein kinase required during spermatid development. Phosphorylates 'Ser-288' of TSKS. Involved in the late stages of spermatogenesis, during the reconstruction of the cytoplasm. During spermatogenesis, required for the transformation of a ring-shaped structure around the base of the flagellum originating from the chromatoid body. In Homo sapiens (Human), this protein is Testis-specific serine/threonine-protein kinase 1 (TSSK1B).